The following is a 376-amino-acid chain: 4-hydroxy-3-methylbut-2-enyl diphosphate reductase (376 aa).

Residue C19 coordinates [4Fe-4S] cluster. Residues H48 and H99 each coordinate (2E)-4-hydroxy-3-methylbut-2-enyl diphosphate. Dimethylallyl diphosphate is bound by residues H48 and H99. Isopentenyl diphosphate is bound by residues H48 and H99. Residue C121 participates in [4Fe-4S] cluster binding. H149 is a (2E)-4-hydroxy-3-methylbut-2-enyl diphosphate binding site. H149 lines the dimethylallyl diphosphate pocket. H149 serves as a coordination point for isopentenyl diphosphate. The active-site Proton donor is E151. T208 provides a ligand contact to (2E)-4-hydroxy-3-methylbut-2-enyl diphosphate. Position 236 (C236) interacts with [4Fe-4S] cluster. Residues S264, N266, and S307 each coordinate (2E)-4-hydroxy-3-methylbut-2-enyl diphosphate. Dimethylallyl diphosphate is bound by residues S264, N266, and S307. 3 residues coordinate isopentenyl diphosphate: S264, N266, and S307.

Belongs to the IspH family. [4Fe-4S] cluster is required as a cofactor.

It carries out the reaction isopentenyl diphosphate + 2 oxidized [2Fe-2S]-[ferredoxin] + H2O = (2E)-4-hydroxy-3-methylbut-2-enyl diphosphate + 2 reduced [2Fe-2S]-[ferredoxin] + 2 H(+). The enzyme catalyses dimethylallyl diphosphate + 2 oxidized [2Fe-2S]-[ferredoxin] + H2O = (2E)-4-hydroxy-3-methylbut-2-enyl diphosphate + 2 reduced [2Fe-2S]-[ferredoxin] + 2 H(+). The protein operates within isoprenoid biosynthesis; dimethylallyl diphosphate biosynthesis; dimethylallyl diphosphate from (2E)-4-hydroxy-3-methylbutenyl diphosphate: step 1/1. It functions in the pathway isoprenoid biosynthesis; isopentenyl diphosphate biosynthesis via DXP pathway; isopentenyl diphosphate from 1-deoxy-D-xylulose 5-phosphate: step 6/6. Its function is as follows. Catalyzes the conversion of 1-hydroxy-2-methyl-2-(E)-butenyl 4-diphosphate (HMBPP) into a mixture of isopentenyl diphosphate (IPP) and dimethylallyl diphosphate (DMAPP). Acts in the terminal step of the DOXP/MEP pathway for isoprenoid precursor biosynthesis. In Treponema pallidum (strain Nichols), this protein is 4-hydroxy-3-methylbut-2-enyl diphosphate reductase.